Here is a 276-residue protein sequence, read N- to C-terminus: Undecaprenyl-diphosphatase (276 aa).

Helical transmembrane passes span 46–66 (AGAS…LIYF), 94–114 (LMGI…VKAI), 122–142 (LWVV…AERV), 152–172 (LGIG…IPGV), 196–216 (SFLL…IAEF), 226–246 (LGTL…IRFL), and 253–273 (VFIV…ALGF).

Belongs to the UppP family.

The protein localises to the cell inner membrane. It carries out the reaction di-trans,octa-cis-undecaprenyl diphosphate + H2O = di-trans,octa-cis-undecaprenyl phosphate + phosphate + H(+). In terms of biological role, catalyzes the dephosphorylation of undecaprenyl diphosphate (UPP). Confers resistance to bacitracin. The sequence is that of Undecaprenyl-diphosphatase from Synechococcus sp. (strain JA-3-3Ab) (Cyanobacteria bacterium Yellowstone A-Prime).